Consider the following 152-residue polypeptide: Troponin C (152 aa).

Residue Thr-1 is modified to N-acetylthreonine. EF-hand domains lie at Lys-9–Leu-44, Val-45–Glu-80, Leu-82–Glu-117, and Leu-118–Ala-152. Ca(2+) is bound by residues Asp-131, Asp-133, Ser-135, Thr-137, and Glu-142.

This sequence belongs to the troponin C family.

Troponin is the central regulatory protein of striated muscle contraction. Tn consists of three components: Tn-I which is the inhibitor of actomyosin ATPase, Tn-T which contains the binding site for tropomyosin and Tn-C. The binding of calcium to Tn-C abolishes the inhibitory action of Tn on actin filaments. The sequence is that of Troponin C from Mizuhopecten yessoensis (Japanese scallop).